The following is a 302-amino-acid chain: tRNA-cytidine(32) 2-sulfurtransferase (302 aa).

Residues 57-62 carry the PP-loop motif motif; sequence SGGKDS. 3 residues coordinate [4Fe-4S] cluster: C132, C135, and C223.

It belongs to the TtcA family. In terms of assembly, homodimer. The cofactor is Mg(2+). [4Fe-4S] cluster is required as a cofactor.

It is found in the cytoplasm. The enzyme catalyses cytidine(32) in tRNA + S-sulfanyl-L-cysteinyl-[cysteine desulfurase] + AH2 + ATP = 2-thiocytidine(32) in tRNA + L-cysteinyl-[cysteine desulfurase] + A + AMP + diphosphate + H(+). It functions in the pathway tRNA modification. Catalyzes the ATP-dependent 2-thiolation of cytidine in position 32 of tRNA, to form 2-thiocytidine (s(2)C32). The sulfur atoms are provided by the cysteine/cysteine desulfurase (IscS) system. The protein is tRNA-cytidine(32) 2-sulfurtransferase of Marinobacter nauticus (strain ATCC 700491 / DSM 11845 / VT8) (Marinobacter aquaeolei).